A 336-amino-acid polypeptide reads, in one-letter code: Ribosomal RNA large subunit methyltransferase F (336 aa).

This sequence belongs to the methyltransferase superfamily. METTL16/RlmF family.

The protein localises to the cytoplasm. It carries out the reaction adenosine(1618) in 23S rRNA + S-adenosyl-L-methionine = N(6)-methyladenosine(1618) in 23S rRNA + S-adenosyl-L-homocysteine + H(+). Its function is as follows. Specifically methylates the adenine in position 1618 of 23S rRNA. The chain is Ribosomal RNA large subunit methyltransferase F from Yersinia pseudotuberculosis serotype I (strain IP32953).